Here is a 199-residue protein sequence, read N- to C-terminus: ATP-dependent Clp protease proteolytic subunit (199 aa).

Serine 98 serves as the catalytic Nucleophile. The active site involves histidine 123.

The protein belongs to the peptidase S14 family. As to quaternary structure, fourteen ClpP subunits assemble into 2 heptameric rings which stack back to back to give a disk-like structure with a central cavity, resembling the structure of eukaryotic proteasomes.

The protein resides in the cytoplasm. It catalyses the reaction Hydrolysis of proteins to small peptides in the presence of ATP and magnesium. alpha-casein is the usual test substrate. In the absence of ATP, only oligopeptides shorter than five residues are hydrolyzed (such as succinyl-Leu-Tyr-|-NHMec, and Leu-Tyr-Leu-|-Tyr-Trp, in which cleavage of the -Tyr-|-Leu- and -Tyr-|-Trp bonds also occurs).. Its function is as follows. Cleaves peptides in various proteins in a process that requires ATP hydrolysis. Has a chymotrypsin-like activity. Plays a major role in the degradation of misfolded proteins. The sequence is that of ATP-dependent Clp protease proteolytic subunit from Clostridium botulinum (strain Alaska E43 / Type E3).